Consider the following 282-residue polypeptide: Release factor glutamine methyltransferase (282 aa).

S-adenosyl-L-methionine-binding positions include 120–124, D143, and N189; that span reads GVGSG. 189-192 serves as a coordination point for substrate; it reads NPPY.

It belongs to the protein N5-glutamine methyltransferase family. PrmC subfamily.

It catalyses the reaction L-glutaminyl-[peptide chain release factor] + S-adenosyl-L-methionine = N(5)-methyl-L-glutaminyl-[peptide chain release factor] + S-adenosyl-L-homocysteine + H(+). Methylates the class 1 translation termination release factors RF1/PrfA and RF2/PrfB on the glutamine residue of the universally conserved GGQ motif. This Dictyoglomus turgidum (strain DSM 6724 / Z-1310) protein is Release factor glutamine methyltransferase.